Here is a 2368-residue protein sequence, read N- to C-terminus: Highly reducing polyketide synthase cla2 (2368 aa).

The region spanning 10–434 (QIPIAIVGLG…GTNGLVVLEA (425 aa)) is the Ketosynthase family 3 (KS3) domain. Catalysis depends on for beta-ketoacyl synthase activity residues cysteine 182, histidine 317, and histidine 357. The tract at residues 548–877 (FVFTGQGAQW…RGQNALDTSL (330 aa)) is malonyl-CoA:ACP transacylase (MAT) domain. Residue serine 638 is the For malonyltransferase activity of the active site. The segment at 936–1071 (HSMIGLKQPM…GLVAIEYTNK (136 aa)) is N-terminal hotdog fold. The dehydratase (DH) domain stretch occupies residues 936 to 1175 (HSMIGLKQPM…AIFQSIFGST (240 aa)). In terms of domain architecture, PKS/mFAS DH spans 936 to 1255 (HSMIGLKQPM…MTEPEVGDDA (320 aa)). The Proton acceptor; for dehydratase activity role is filled by histidine 968. A C-terminal hotdog fold region spans residues 1099 to 1255 (PLMIRREKFY…MTEPEVGDDA (157 aa)). Catalysis depends on aspartate 1165, which acts as the Proton donor; for dehydratase activity. Residues 1655-1967 (GFLDSLQFIK…QGKHRGKLVL (313 aa)) are enoylreductase (ER) domain. The interval 1991 to 2170 (ATYLIIGGLG…AVAVNLTIIR (180 aa)) is catalytic ketoreductase (KRc) domain. In terms of domain architecture, Carrier spans 2283-2360 (QASEIITEGL…VLAKTIASRS (78 aa)). An O-(pantetheine 4'-phosphoryl)serine modification is found at serine 2320.

It functions in the pathway secondary metabolite biosynthesis. In terms of biological role, highly reducing polyketide synthase; part of the gene cluster that mediates the biosynthesis of cladosporin, a tricyclic octaketide that acts as an antimalarial agent though inhibition of the Plasmodium falciparum lysyl-tRNA synthetase. The highly reducing polyketide synthase cla2 is responsible for biosynthesis up to the pentaketide stage, including of the tetrahydropyran (THP) ring, whereas the three subsequent ketide extensions with no reduction are catalyzed by the non-reducing polyketide synthase cla3. In Cladosporium cladosporioides, this protein is Highly reducing polyketide synthase cla2.